Reading from the N-terminus, the 454-residue chain is uncharacterized protein (454 aa).

[4Fe-4S] cluster-binding residues include C73, C79, C82, and C154. Q279, F307, D328, and D381 together coordinate S-adenosyl-L-methionine. C408 serves as the catalytic Nucleophile.

Belongs to the class I-like SAM-binding methyltransferase superfamily. RNA M5U methyltransferase family.

This is an uncharacterized protein from Leptospira interrogans serogroup Icterohaemorrhagiae serovar Lai (strain 56601).